Reading from the N-terminus, the 289-residue chain is Cytochrome bc1 complex cytochrome c subunit (289 aa).

Positions 1-11 are enriched in basic residues; sequence MKKLGFTRSSR. Residues 1 to 28 are disordered; that stretch reads MKKLGFTRSSRRCSQPQEREQESERSRR. A helical transmembrane segment spans residues 37 to 55; sequence GLLLLVALTVSGGLAAVLT. Cytochrome c domains follow at residues 69-149 and 170-248; these read ALLR…QANG and TDLG…RTVI. Residues Cys-82, Cys-85, His-86, Cys-183, Cys-186, and His-187 each coordinate heme c. The helical transmembrane segment at 267 to 287 threads the bilayer; it reads GMAIWIIGMVTAIGLALWIGA.

The cytochrome bc1 complex is composed of a cytochrome b (QcrB), the Rieske iron-sulfur protein (QcrA) and a diheme cytochrome c (QcrC) subunit. Post-translationally, binds 2 heme c groups covalently per subunit.

The protein localises to the cell membrane. The catalysed reaction is a quinol + 2 Fe(III)-[cytochrome c](out) = a quinone + 2 Fe(II)-[cytochrome c](out) + 2 H(+)(out). Functionally, cytochrome b subunit of the cytochrome bc1 complex, an essential component of the respiratory electron transport chain required for ATP synthesis. The bc1 complex catalyzes the oxidation of ubiquinol and the reduction of cytochrome c in the respiratory chain. The bc1 complex operates through a Q-cycle mechanism that couples electron transfer to generation of the proton gradient that drives ATP synthesis. This is Cytochrome bc1 complex cytochrome c subunit (qcrC) from Mycobacterium leprae (strain TN).